Here is a 421-residue protein sequence, read N- to C-terminus: Subtilisin-like protease 2 (421 aa).

The signal sequence occupies residues 1 to 16; that stretch reads MQLLNFGLLLLPFVAG. The propeptide occupies 17 to 122; the sequence is DLAPQPEPLL…VHPDQHVYLA (106 aa). One can recognise an Inhibitor I9 domain in the interval 36–122; the sequence is QYIVTLKEGL…VHPDQHVYLA (87 aa). Positions 131–421 constitute a Peptidase S8 domain; that stretch reads RWGLGYMSSK…ERKFTLPKYF (291 aa). Residues Asp-169 and His-201 each act as charge relay system in the active site. Residues Asn-248, Asn-261, and Asn-348 are each glycosylated (N-linked (GlcNAc...) asparagine). Ser-357 serves as the catalytic Charge relay system. N-linked (GlcNAc...) asparagine glycosylation occurs at Asn-388.

It belongs to the peptidase S8 family.

Its subcellular location is the secreted. In terms of biological role, secreted subtilisin-like serine protease with keratinolytic activity that contributes to pathogenicity. The sequence is that of Subtilisin-like protease 2 (SUB2) from Trichophyton tonsurans (Scalp ringworm fungus).